We begin with the raw amino-acid sequence, 376 residues long: MTETADPLNRPLKRGWTTGSCATAAARAAYELLMTGSCPAIVDIALPGGRRASFAVAIHEAEGGRATAGVVKDAGDDPDVTHGALIKATVQRRDAGSGIAFRAGSGVGTVTRPGLPLPPGEPAINPVPREMIIAAIDEAATALGGTRDVTVEIAIPGGEDLAKKTLNPRLGIVGGLSILGTTGIVVPFSCAAWIHSIYRGIDVARAAGLPHIAGATGSTSEKAVQQLYGLPDTALIDMGDFAGGMLKYLRRHPVGRVTVAGGFAKMTKLGQGLLDLHSRAGEVDLGWLATALHDAGAPPELVETARTANTALQVLQESDRSGFPAGDVVARAAWQTAYRALANDAVALDVAVFDRDGRLVGRCLGADHSPLPRNRR.

This sequence belongs to the CbiD family.

The enzyme catalyses Co-precorrin-5B + S-adenosyl-L-methionine = Co-precorrin-6A + S-adenosyl-L-homocysteine. Its pathway is cofactor biosynthesis; adenosylcobalamin biosynthesis; cob(II)yrinate a,c-diamide from sirohydrochlorin (anaerobic route): step 6/10. Functionally, catalyzes the methylation of C-1 in cobalt-precorrin-5B to form cobalt-precorrin-6A. The polypeptide is Cobalt-precorrin-5B C(1)-methyltransferase (Bradyrhizobium sp. (strain BTAi1 / ATCC BAA-1182)).